Consider the following 460-residue polypeptide: NADH-ubiquinone oxidoreductase chain 4 (460 aa).

Helical transmembrane passes span 22–42, 59–79, 94–113, 117–139, 148–168, 195–215, 231–251, 258–278, 286–306, 310–330, 343–362, 394–414, and 436–456; these read WLWS…LSWF, IDPL…LMIL, RIYI…AFSA, ILFY…RWGN, TYFL…LLFM, FWWT…GVHL, ILAA…IIML, MAYP…SICL, MIAY…LIQT, FAGA…LFCL, LLLA…WWLL, ILLT…MFLM, and LLLT…ELIW.

It belongs to the complex I subunit 4 family.

The protein localises to the mitochondrion membrane. The catalysed reaction is a ubiquinone + NADH + 5 H(+)(in) = a ubiquinol + NAD(+) + 4 H(+)(out). Its function is as follows. Core subunit of the mitochondrial membrane respiratory chain NADH dehydrogenase (Complex I) that is believed to belong to the minimal assembly required for catalysis. Complex I functions in the transfer of electrons from NADH to the respiratory chain. The immediate electron acceptor for the enzyme is believed to be ubiquinone. The protein is NADH-ubiquinone oxidoreductase chain 4 (MTND4) of Scyliorhinus canicula (Small-spotted catshark).